The primary structure comprises 138 residues: Large ribosomal subunit protein uL16 (138 aa).

Residues 1 to 13 are compositionally biased toward basic residues; the sequence is MLQPKRRKYRKEQ. Residues 1-24 are disordered; the sequence is MLQPKRRKYRKEQKGRNTGKATRG.

Belongs to the universal ribosomal protein uL16 family. As to quaternary structure, part of the 50S ribosomal subunit.

Functionally, binds 23S rRNA and is also seen to make contacts with the A and possibly P site tRNAs. In Cupriavidus necator (strain ATCC 17699 / DSM 428 / KCTC 22496 / NCIMB 10442 / H16 / Stanier 337) (Ralstonia eutropha), this protein is Large ribosomal subunit protein uL16.